Here is a 483-residue protein sequence, read N- to C-terminus: Cobyric acid synthase (483 aa).

Residues 251–438 (ALIVAVPMLP…LHGIFSADRF (188 aa)) form the GATase cobBQ-type domain. Cys-333 acts as the Nucleophile in catalysis. The active site involves His-430.

It belongs to the CobB/CobQ family. CobQ subfamily.

The protein operates within cofactor biosynthesis; adenosylcobalamin biosynthesis. In terms of biological role, catalyzes amidations at positions B, D, E, and G on adenosylcobyrinic A,C-diamide. NH(2) groups are provided by glutamine, and one molecule of ATP is hydrogenolyzed for each amidation. This is Cobyric acid synthase from Brucella abortus (strain S19).